Consider the following 66-residue polypeptide: Large ribosomal subunit protein uL29 (66 aa).

The protein belongs to the universal ribosomal protein uL29 family.

The protein is Large ribosomal subunit protein uL29 of Deinococcus deserti (strain DSM 17065 / CIP 109153 / LMG 22923 / VCD115).